The sequence spans 206 residues: 3-isopropylmalate dehydratase small subunit (206 aa).

Belongs to the LeuD family. LeuD type 1 subfamily. In terms of assembly, heterodimer of LeuC and LeuD.

The enzyme catalyses (2R,3S)-3-isopropylmalate = (2S)-2-isopropylmalate. The protein operates within amino-acid biosynthesis; L-leucine biosynthesis; L-leucine from 3-methyl-2-oxobutanoate: step 2/4. Its function is as follows. Catalyzes the isomerization between 2-isopropylmalate and 3-isopropylmalate, via the formation of 2-isopropylmaleate. The sequence is that of 3-isopropylmalate dehydratase small subunit from Leptospira interrogans serogroup Icterohaemorrhagiae serovar copenhageni (strain Fiocruz L1-130).